Here is a 161-residue protein sequence, read N- to C-terminus: Nucleotide-binding protein lpl1175 (161 aa).

Belongs to the YajQ family.

In terms of biological role, nucleotide-binding protein. This is Nucleotide-binding protein lpl1175 from Legionella pneumophila (strain Lens).